The sequence spans 257 residues: Protein orai-2 (257 aa).

4 consecutive transmembrane segments (helical) span residues 62–79 (ASSRTSALLSGFAMVAMV), 94–114 (LIAFSACTTVLVAVHLFALLI), 156–176 (LGILLFLAEVVLLCWIKFLPI), and 201–221 (LVSTIIMVPVGIIFVIFTIHF).

This sequence belongs to the Orai family.

It localises to the membrane. In terms of biological role, ca(2+) release-activated Ca(2+)-like (CRAC-like) channel subunit which mediates Ca(2+) influx and increase in Ca(2+)-selective current by synergy with the Ca(2+) sensor, stim1. The polypeptide is Protein orai-2 (orai2) (Xenopus laevis (African clawed frog)).